The following is a 349-amino-acid chain: AA9 family lytic polysaccharide monooxygenase A (349 aa).

The signal sequence occupies residues 1–19; sequence MKSTFGLLALAAAAKLVSA. His20 and His102 together coordinate Cu(2+). The cysteines at positions 62 and 183 are disulfide-linked. Residue His169 coordinates O2. Tyr180 is a Cu(2+) binding site. The interval 233–304 is disordered; that stretch reads DGSSSGSSGS…SGSNSGSDSC (72 aa). Low complexity-rich tracts occupy residues 234-262 and 269-304; these read GSSS…AVPT and TSAT…SDSC. One can recognise a CBM1 domain in the interval 311–347; it reads GSVKIYGQCGGQNYSGPTSCEAGLICKEWNPYYHQCV. Residue Asn323 is glycosylated (N-linked (GlcNAc...) asparagine).

It belongs to the polysaccharide monooxygenase AA9 family. Cu(2+) is required as a cofactor.

The protein localises to the secreted. The catalysed reaction is [(1-&gt;4)-beta-D-glucosyl]n+m + reduced acceptor + O2 = 4-dehydro-beta-D-glucosyl-[(1-&gt;4)-beta-D-glucosyl]n-1 + [(1-&gt;4)-beta-D-glucosyl]m + acceptor + H2O.. Functionally, lytic polysaccharide monooxygenase (LPMO) that depolymerizes crystalline and amorphous polysaccharides via the oxidation of scissile alpha- or beta-(1-4)-glycosidic bonds, yielding C4 oxidation products. Catalysis by LPMOs requires the reduction of the active-site copper from Cu(II) to Cu(I) by a reducing agent and H(2)O(2) or O(2) as a cosubstrate. In Aspergillus fumigatus (strain CBS 144.89 / FGSC A1163 / CEA10) (Neosartorya fumigata), this protein is AA9 family lytic polysaccharide monooxygenase A (eglD).